The chain runs to 309 residues: Taste receptor type 2 member 31 (309 aa).

Residues 1–2 (MT) are Extracellular-facing. A helical membrane pass occupies residues 3-23 (TFLPIIFSSLVVVIFVIGNFA). The Cytoplasmic portion of the chain corresponds to 24–55 (NGFIALVNSIEWFKXQKISFADQILTALAVSR). A helical membrane pass occupies residues 56-76 (VGLLWVLLLNWYSTVLNPAFY). The Extracellular segment spans residues 77–100 (SVEVRTTAYNVWAVTGHFSNWLAT). The chain crosses the membrane as a helical span at residues 101 to 121 (SLSIFYLLKIANFSNFIFLHL). The Cytoplasmic portion of the chain corresponds to 122–126 (KRRVK). Residues 127–147 (SVILVMLLGPLLFLACQLFMI) form a helical membrane-spanning segment. Residues 148 to 181 (NMKEIVRTKEYEGNMTWKIKLRSAVYLSDATVTT) lie on the Extracellular side of the membrane. A glycan (N-linked (GlcNAc...) asparagine) is linked at Asn161. The helical transmembrane segment at 182–202 (LGNLVPFTLTLLCFLLLICSL) threads the bilayer. The Cytoplasmic segment spans residues 203 to 229 (CKHLKKMQLHGKGSQDPSTKVHIKVLQ). Residues 230 to 250 (TVISFLLLCAIYFLSIMISVW) traverse the membrane as a helical segment. Residues 251 to 259 (SFGSLKNKP) are Extracellular-facing. The helical transmembrane segment at 260–280 (VFMFCKAIRFSYPSIHPFILI) threads the bilayer. At 281–309 (WGNKKLKQTFLSVLRQVRYWVKGEKPSSP) the chain is on the cytoplasmic side.

Belongs to the G-protein coupled receptor T2R family.

The protein resides in the membrane. Functionally, receptor that may play a role in the perception of bitterness and is gustducin-linked. May play a role in sensing the chemical composition of the gastrointestinal content. The activity of this receptor may stimulate alpha gustducin, mediate PLC-beta-2 activation and lead to the gating of TRPM5. The polypeptide is Taste receptor type 2 member 31 (TAS2R31) (Pan paniscus (Pygmy chimpanzee)).